We begin with the raw amino-acid sequence, 196 residues long: tRNA(Phe) 7-((3-amino-3-carboxypropyl)-4-demethylwyosine(37)-N(4))-methyltransferase 1 (196 aa).

Belongs to the TYW3 family.

It carries out the reaction 4-demethyl-7-[(3S)-3-amino-3-carboxypropyl]wyosine(37) in tRNA(Phe) + S-adenosyl-L-methionine = 7-[(3S)-3-amino-3-carboxypropyl]wyosine(37) in tRNA(Phe) + S-adenosyl-L-homocysteine + H(+). In terms of biological role, S-adenosyl-L-methionine-dependent methyltransferase that acts as a component of the wyosine derivatives biosynthesis pathway. Probably methylates N-4 position of wybutosine-86 to produce wybutosine-72. In Pyrococcus horikoshii (strain ATCC 700860 / DSM 12428 / JCM 9974 / NBRC 100139 / OT-3), this protein is tRNA(Phe) 7-((3-amino-3-carboxypropyl)-4-demethylwyosine(37)-N(4))-methyltransferase 1.